The sequence spans 423 residues: Large ribosomal subunit protein mL37 (423 aa).

Residues 1-29 (MALASGPAMRALAGSARLGLGGYGAPKRG) constitute a mitochondrion transit peptide.

It belongs to the mitochondrion-specific ribosomal protein mL37 family. As to quaternary structure, component of the mitochondrial ribosome large subunit (39S) which comprises a 16S rRNA and about 50 distinct proteins.

It is found in the mitochondrion. In Rattus norvegicus (Rat), this protein is Large ribosomal subunit protein mL37 (Mrpl37).